A 201-amino-acid polypeptide reads, in one-letter code: Mediator of RNA polymerase II transcription subunit 19 (201 aa).

Residues 166–201 (GTGKSNAKKRKNRSNGSSMATPNSEMQDDVKRRRLE) are disordered.

It belongs to the Mediator complex subunit 19 family. Component of the Mediator complex.

The protein localises to the nucleus. In terms of biological role, component of the Mediator complex, a coactivator involved in the regulated transcription of nearly all RNA polymerase II-dependent genes. Mediator functions as a bridge to convey information from gene-specific regulatory proteins to the basal RNA polymerase II transcription machinery. Mediator is recruited to promoters by direct interactions with regulatory proteins and serves as a scaffold for the assembly of a functional preinitiation complex with RNA polymerase II and the general transcription factors. The sequence is that of Mediator of RNA polymerase II transcription subunit 19 (ROX3) from Candida glabrata (strain ATCC 2001 / BCRC 20586 / JCM 3761 / NBRC 0622 / NRRL Y-65 / CBS 138) (Yeast).